We begin with the raw amino-acid sequence, 335 residues long: Beta-ketoacyl-[acyl-carrier-protein] synthase III (335 aa).

Residues Cys119 and His261 contribute to the active site. The interval 262–266 is ACP-binding; sequence QANQR. Residue Asn291 is part of the active site.

It belongs to the thiolase-like superfamily. FabH family. In terms of assembly, homodimer.

The protein resides in the cytoplasm. The enzyme catalyses malonyl-[ACP] + acetyl-CoA + H(+) = 3-oxobutanoyl-[ACP] + CO2 + CoA. Its pathway is lipid metabolism; fatty acid biosynthesis. Its function is as follows. Catalyzes the condensation reaction of fatty acid synthesis by the addition to an acyl acceptor of two carbons from malonyl-ACP. Catalyzes the first condensation reaction which initiates fatty acid synthesis and may therefore play a role in governing the total rate of fatty acid production. Possesses both acetoacetyl-ACP synthase and acetyl transacylase activities. Its substrate specificity determines the biosynthesis of branched-chain and/or straight-chain of fatty acids. This is Beta-ketoacyl-[acyl-carrier-protein] synthase III from Prochlorococcus marinus (strain MIT 9515).